Consider the following 82-residue polypeptide: MRTIVFLIVSILLLSSAVLMLAEGNAASHELQEYPIEESLEEQRKCVDGSCDPYSSDAPRCCGSQICQCIFFVPCYCKYRGK.

The first 26 residues, 1 to 26 (MRTIVFLIVSILLLSSAVLMLAEGNA), serve as a signal peptide directing secretion. Residues 27–44 (ASHELQEYPIEESLEEQR) constitute a propeptide that is removed on maturation. Cystine bridges form between C46–C62, C51–C67, C61–C77, and C69–C75. Arginine amide is present on R80.

It belongs to the rTX family. Expressed by the venom gland.

Its subcellular location is the secreted. Its function is as follows. Induces flaccid paralysis when injected into lepidopteran larvae. Intracranial injection into mice causes awkwardness of movement and laboured respiration until death. This chain is U7-hexatoxin-Mg1a, found in Macrothele gigas (Japanese funnel web spider).